A 406-amino-acid polypeptide reads, in one-letter code: Copper transport protein CTR1 (406 aa).

At methionine 1–lysine 152 the chain is on the cytoplasmic side. 3 repeat units span residues serine 9–alanine 27, serine 28–serine 46, and serine 47–serine 65. The tract at residues serine 9–serine 65 is 3 X 19 AA tandem repeats of S-M-X-M-X-A-M-S-S-A-S-K-T-X-X-S-X-M-X. A disordered region spans residues serine 71 to serine 117. Residues alanine 153–valine 173 traverse the membrane as a helical segment. The Extracellular portion of the chain corresponds to serine 174 to methionine 250. The chain crosses the membrane as a helical span at residues isoleucine 251–isoleucine 271. The Cytoplasmic portion of the chain corresponds to threonine 272 to asparagine 406. An REP-III motif is present at residues cysteine 304–histidine 315. The disordered stretch occupies residues proline 318–asparagine 406. Position 344 is a phosphoserine (serine 344). Lysine 345 is covalently cross-linked (Glycyl lysine isopeptide (Lys-Gly) (interchain with G-Cter in ubiquitin)). At serine 349 the chain carries Phosphoserine. Polar residues-rich tracts occupy residues serine 349–asparagine 375 and serine 384–glutamine 395. Residue threonine 356 is modified to Phosphothreonine. Phosphoserine is present on serine 369.

In terms of assembly, homooligomer. Post-translationally, extensively O-glycosylated.

It localises to the cell membrane. The enzyme catalyses Cu(2+)(in) = Cu(2+)(out). In terms of biological role, high-affinity copper transporter of plasma membrane that mediates copper uptake under low copper conditions. Copper transport through the high affinity system requiring CTRl supplies the iron transport multicopper ferroxidase FET3 with copper, which in turn is required for ferrous iron uptake. The energy for translocation is unlikely to be directly derived from ATP hydrolysis and the exact mechanism driving the transmembrane transport of copper has still to be determined. Binds 4 copper ions via its C-terminal cystein-rich domain and is able to deliver Cu(I) directly to both the chaperone ATX1 and to an N-terminal domain of the CCC2 protein. Also able to mediate the uptake of the anticancer drug cisplatin. The chain is Copper transport protein CTR1 from Saccharomyces cerevisiae (strain ATCC 204508 / S288c) (Baker's yeast).